A 738-amino-acid chain; its full sequence is Alanine--tRNA ligase (738 aa).

4 residues coordinate Zn(2+): H564, H568, C666, and H670.

It belongs to the class-II aminoacyl-tRNA synthetase family. In terms of assembly, homotetramer. Zn(2+) is required as a cofactor.

It is found in the cytoplasm. The enzyme catalyses tRNA(Ala) + L-alanine + ATP = L-alanyl-tRNA(Ala) + AMP + diphosphate. In terms of biological role, catalyzes the attachment of alanine to tRNA(Ala) in a two-step reaction: alanine is first activated by ATP to form Ala-AMP and then transferred to the acceptor end of tRNA(Ala). Also edits incorrectly charged Ser-tRNA(Ala) and Gly-tRNA(Ala) via its editing domain. The chain is Alanine--tRNA ligase (alaS) from Yersinia pestis bv. Antiqua (strain Antiqua).